The chain runs to 599 residues: Aspartate--tRNA(Asp/Asn) ligase (599 aa).

Glutamate 174 lines the L-aspartate pocket. The aspartate stretch occupies residues 198–201; that stretch reads QLFK. Residue arginine 220 coordinates L-aspartate. Residues 220–222 and glutamine 229 each bind ATP; that span reads RDE. Histidine 457 is an L-aspartate binding site. Residue glutamate 491 participates in ATP binding. Residue arginine 498 participates in L-aspartate binding. 543–546 is an ATP binding site; that stretch reads GLDR.

It belongs to the class-II aminoacyl-tRNA synthetase family. Type 1 subfamily. As to quaternary structure, homodimer.

It localises to the cytoplasm. The catalysed reaction is tRNA(Asx) + L-aspartate + ATP = L-aspartyl-tRNA(Asx) + AMP + diphosphate. Aspartyl-tRNA synthetase with relaxed tRNA specificity since it is able to aspartylate not only its cognate tRNA(Asp) but also tRNA(Asn). Reaction proceeds in two steps: L-aspartate is first activated by ATP to form Asp-AMP and then transferred to the acceptor end of tRNA(Asp/Asn). The sequence is that of Aspartate--tRNA(Asp/Asn) ligase from Paraburkholderia xenovorans (strain LB400).